A 473-amino-acid chain; its full sequence is GTPase Der (473 aa).

EngA-type G domains follow at residues 3–167 and 203–378; these read FTVA…GKDR and LRVA…RVWN. GTP is bound by residues 9–16, 56–60, 119–122, 209–216, 256–260, and 321–324; these read GRPNVGKS, DTAGL, NKSE, GRPNAGKS, DTAGM, and NKWD. Residues 379-463 form the KH-like domain; it reads KRISTAKLNR…PIRIHFRSAE (85 aa).

Belongs to the TRAFAC class TrmE-Era-EngA-EngB-Septin-like GTPase superfamily. EngA (Der) GTPase family. Associates with the 50S ribosomal subunit.

Functionally, GTPase that plays an essential role in the late steps of ribosome biogenesis. This is GTPase Der from Rhizobium leguminosarum bv. trifolii (strain WSM2304).